The primary structure comprises 167 residues: NADH-quinone oxidoreductase subunit E (167 aa).

[2Fe-2S] cluster is bound by residues Cys91, Cys96, Cys132, and Cys136.

It belongs to the complex I 24 kDa subunit family. [2Fe-2S] cluster is required as a cofactor.

The catalysed reaction is a quinone + NADH + 5 H(+)(in) = a quinol + NAD(+) + 4 H(+)(out). Its function is as follows. NDH-1 shuttles electrons from NADH, via FMN and iron-sulfur (Fe-S) centers, to quinones in the respiratory chain. Couples the redox reaction to proton translocation (for every two electrons transferred, four hydrogen ions are translocated across the cytoplasmic membrane), and thus conserves the redox energy in a proton gradient. This chain is NADH-quinone oxidoreductase subunit E (nuoE), found in Rickettsia conorii (strain ATCC VR-613 / Malish 7).